We begin with the raw amino-acid sequence, 396 residues long: 1-deoxy-D-xylulose 5-phosphate reductoisomerase (396 aa).

Positions 17, 18, 19, 20, 47, and 130 each coordinate NADPH. Lysine 131 contributes to the 1-deoxy-D-xylulose 5-phosphate binding site. Residue glutamate 132 coordinates NADPH. Aspartate 156 lines the Mn(2+) pocket. Positions 157, 158, 182, and 205 each coordinate 1-deoxy-D-xylulose 5-phosphate. A Mn(2+)-binding site is contributed by glutamate 158. Glycine 211 provides a ligand contact to NADPH. Residues serine 218, asparagine 223, lysine 224, and glutamate 227 each contribute to the 1-deoxy-D-xylulose 5-phosphate site. A Mn(2+)-binding site is contributed by glutamate 227.

It belongs to the DXR family. Mg(2+) serves as cofactor. Requires Mn(2+) as cofactor.

The catalysed reaction is 2-C-methyl-D-erythritol 4-phosphate + NADP(+) = 1-deoxy-D-xylulose 5-phosphate + NADPH + H(+). It functions in the pathway isoprenoid biosynthesis; isopentenyl diphosphate biosynthesis via DXP pathway; isopentenyl diphosphate from 1-deoxy-D-xylulose 5-phosphate: step 1/6. In terms of biological role, catalyzes the NADPH-dependent rearrangement and reduction of 1-deoxy-D-xylulose-5-phosphate (DXP) to 2-C-methyl-D-erythritol 4-phosphate (MEP). This Rhizobium johnstonii (strain DSM 114642 / LMG 32736 / 3841) (Rhizobium leguminosarum bv. viciae) protein is 1-deoxy-D-xylulose 5-phosphate reductoisomerase.